Here is a 170-residue protein sequence, read N- to C-terminus: uncharacterized protein (170 aa).

This is an uncharacterized protein from Treponema pallidum (strain Nichols).